Consider the following 482-residue polypeptide: Interferon-induced protein with tetratricopeptide repeats 5 (482 aa).

TPR repeat units follow at residues 51-84 (LALY…IQQE), 94-127 (LVTW…CKKL), 138-173 (PETD…EPDN), 181-214 (AITV…NPDN), 249-282 (PYVL…TPTS), 338-371 (AFAY…ENIT), 376-410 (HQIH…KDRS), and 435-468 (VQSL…DPEN). Residues 254-260 (YAAKFYR) are interaction with the 5'-triphosphate group of PPP-RNA.

The protein belongs to the IFIT family. As to quaternary structure, monomer. Interacts with MAP3K7 and the components of the IKK core complex CHUK, IKBKB and IKBKG; the interaction synergizes the recruitment of IKK to MAP3K7 and enhances IKK phosphorylation.

It is found in the cell projection. The protein localises to the ruffle membrane. In terms of biological role, interferon-induced RNA-binding protein involved in the human innate immune response. Has a broad and adaptable RNA structure recognition important for RNA recognition specificity in antiviral defense. Binds precursor and processed tRNAs as well as poly-U-tailed tRNA fragments. Specifically binds single-stranded RNA bearing a 5'-triphosphate group (PPP-RNA), thereby acting as a sensor of viral single-stranded RNAs. Single-stranded PPP-RNAs, which lack 2'-O-methylation of the 5' cap and bear a 5'-triphosphate group instead, are specific from viruses, providing a molecular signature to distinguish between self and non-self mRNAs by the host during viral infection. Directly binds PPP-RNA in a non-sequence-specific manner. Also recognizes and selectively binds AT-rich dsDNA. Additionally, as a mediator in innate immunity, positively regulates IKK-NFKB signaling by sinergizing the recruitment of IKK to MAP3K7. The polypeptide is Interferon-induced protein with tetratricopeptide repeats 5 (IFIT5) (Homo sapiens (Human)).